We begin with the raw amino-acid sequence, 456 residues long: Signal transduction histidine-protein kinase ArlS (456 aa).

2 helical membrane-spanning segments follow: residues 13 to 33 (LITT…IIFF) and 157 to 177 (IVAL…SYIF). An HAMP domain is found at 179–232 (SQITKPIVTMSNKMNQIRRDGFQNKLELTTNYEETDNLIDTFNEMMYQIEESFN). The Histidine kinase domain maps to 240-456 (DASHELRTPL…TFKISFPVLN (217 aa)). His-243 carries the post-translational modification Phosphohistidine; by autocatalysis.

Autophosphorylated.

Its subcellular location is the cell membrane. It carries out the reaction ATP + protein L-histidine = ADP + protein N-phospho-L-histidine.. Its function is as follows. Member of the two-component regulatory system ArlS/ArlR. ArlS probably functions as a sensor protein kinase which is autophosphorylated at a histidine residue and transfers its phosphate group to ArlR. The protein is Signal transduction histidine-protein kinase ArlS (arlS) of Staphylococcus epidermidis (strain ATCC 35984 / DSM 28319 / BCRC 17069 / CCUG 31568 / BM 3577 / RP62A).